Consider the following 224-residue polypeptide: Deoxyribose-phosphate aldolase (224 aa).

Aspartate 94 functions as the Proton donor/acceptor in the catalytic mechanism. Lysine 156 functions as the Schiff-base intermediate with acetaldehyde in the catalytic mechanism. The active-site Proton donor/acceptor is the lysine 184.

Belongs to the DeoC/FbaB aldolase family. DeoC type 1 subfamily.

Its subcellular location is the cytoplasm. It carries out the reaction 2-deoxy-D-ribose 5-phosphate = D-glyceraldehyde 3-phosphate + acetaldehyde. It participates in carbohydrate degradation; 2-deoxy-D-ribose 1-phosphate degradation; D-glyceraldehyde 3-phosphate and acetaldehyde from 2-deoxy-alpha-D-ribose 1-phosphate: step 2/2. Catalyzes a reversible aldol reaction between acetaldehyde and D-glyceraldehyde 3-phosphate to generate 2-deoxy-D-ribose 5-phosphate. In Methanocella arvoryzae (strain DSM 22066 / NBRC 105507 / MRE50), this protein is Deoxyribose-phosphate aldolase.